Here is a 368-residue protein sequence, read N- to C-terminus: MAQSVPPASSHGQLTVGEVGTSVNSVPYARHEEIIRAPLTYLLNLPGKDVRSKMIAAFNQWLKIPEDKLDVIKRIIMLLHNASLLLDDIQDSSKLRRGLPVSHSIFGIAQTINAANYAFFLAQQELPKLGDARAFEIFTEELLHLHRGQGMDIYWRDASICPTEEEYFTMVSNKTGGLFRLAVKLMQLASESDKDYVPLVNVLGVIFQIRDDYLNLQSGNYAKNKGFGEDLTEGKFSFPIIHSIRSNPANIQLSSILKQRTTDIDVKLFAVGYIESTGSFEHCRRKLVELTAEARAIMENIADGRSEDLESYACILLSKLILYNRLTYKVPAAQVIHGASGGYSTAPKPRILAQQIATVRAPHLQYAT.

The isopentenyl diphosphate site is built by Lys48, Arg51, and His80. Mg(2+) is bound by residues Asp87 and Asp91. Dimethylallyl diphosphate is bound at residue Arg96. An isopentenyl diphosphate-binding site is contributed by Arg97. Residues Lys174, Thr175, and Gln208 each coordinate dimethylallyl diphosphate. Asp211 is a binding site for Mg(2+). Dimethylallyl diphosphate is bound by residues Asn215, Lys225, and Lys235.

It belongs to the FPP/GGPP synthase family. The cofactor is Mg(2+).

It carries out the reaction isopentenyl diphosphate + dimethylallyl diphosphate = (2E)-geranyl diphosphate + diphosphate. The catalysed reaction is isopentenyl diphosphate + (2E)-geranyl diphosphate = (2E,6E)-farnesyl diphosphate + diphosphate. The enzyme catalyses isopentenyl diphosphate + (2E,6E)-farnesyl diphosphate = (2E,6E,10E)-geranylgeranyl diphosphate + diphosphate. Its pathway is secondary metabolite biosynthesis; terpenoid biosynthesis. Its function is as follows. Geranylgeranyl pyrophosphate synthase; part of the gene cluster that mediates the biosynthesis of diterpenoid pyrones. The first step of the pathway is the synthesis of the alpha-pyrone moiety by the polyketide synthase dpfgA via condensation of one acetyl-CoA starter unit with 3 malonyl-CoA units and 2 methylations. The alpha-pyrone is then combined with geranylgeranyl pyrophosphate (GGPP) formed by the GGPP synthase dpfgD through the action of the prenyltransferase dpfgC to yield a linear alpha-pyrone diterpenoid. Subsequent steps in the diterpenoid pyrone biosynthetic pathway involve the decalin core formation, which is initiated by the epoxidation of the C10-C11 olefin by the FAD-dependent oxidoreductase dpfgE, and is followed by a cyclization cascade catalyzed by the terpene cyclase dpfgB. The short chain dehydrogenase/reductase dpfgG then oxidizes the 8S hydroxy group to a ketone and the short chain dehydrogenase/reductase dpfgH reduces the ketone to the 8R hydroxy group to yield higginsianin B. Higginsianin B is further methylated by the methyltransferase dpfgI to produce the intermediate named FDDP B. The cytochrome P450 monooxygenase dfgpJ then catalyzes a three-step oxidation at C-27 to generate a carboxylic acid as well as C-26 hydroxylation. Finally, methyltransferase dpfgK methylates the carboxylic acid generated by dpfgJ, yielding the final diterpenoid pyrones from the pathway which were named FDDP D and FDDP E. This chain is Geranylgeranyl pyrophosphate synthase dpfgD, found in Gibberella zeae (strain ATCC MYA-4620 / CBS 123657 / FGSC 9075 / NRRL 31084 / PH-1) (Wheat head blight fungus).